A 146-amino-acid chain; its full sequence is Large ribosomal subunit protein uL15 (146 aa).

A compositionally biased stretch (basic and acidic residues) spans 1-13 (MKLHELKAAEGSR). Residues 1-56 (MKLHELKAAEGSRRVRNRVGRGAATGNGKTSGRGQKGQKARSGGKLRPGFEGGQLP) form a disordered region. Positions 23–35 (AATGNGKTSGRGQ) are enriched in gly residues.

It belongs to the universal ribosomal protein uL15 family. In terms of assembly, part of the 50S ribosomal subunit.

Its function is as follows. Binds to the 23S rRNA. This chain is Large ribosomal subunit protein uL15, found in Staphylococcus epidermidis (strain ATCC 35984 / DSM 28319 / BCRC 17069 / CCUG 31568 / BM 3577 / RP62A).